The primary structure comprises 820 residues: Mitogen-activated protein kinase kinase kinase kinase 2 (820 aa).

A Protein kinase domain is found at 16-273; sequence FELLQRVGAG…AEKLLQHPFT (258 aa). ATP contacts are provided by residues 22–30 and lysine 45; that span reads VGAGTYGDV. The Proton acceptor role is filled by aspartate 136. The PEST1 stretch occupies residues 294-314; the sequence is LGTPSPEDCELETYDMFPDTI. Serine 328 is modified (phosphoserine). Positions 344–360 are PEST2; sequence ETDPLNEPWEEEWTLLG. The tract at residues 387–442 is disordered; the sequence is SEFQELDSPDDTMGTIKRAPFLGPLPTDPPAEEPLSSPPGTLPPPPSGPNSSPLLP. Serine 394 is subject to Phosphoserine. The tract at residues 405–448 is PEST3; sequence APFLGPLPTDPPAEEPLSSPPGTLPPPPSGPNSSPLLPTAWATM. Positions 422 to 434 are enriched in pro residues; sequence SSPPGTLPPPPSG. Positions 482–793 constitute a CNH domain; it reads PLRIHAAVTW…IFRVLGAHRD (312 aa).

Belongs to the protein kinase superfamily. STE Ser/Thr protein kinase family. STE20 subfamily. As to quaternary structure, interacts with TRAF2, TRAF6, MAP3K1/MEKK1 and MAP3K11/MLK3. Interacts with RAB8A. The cofactor is Mg(2+). In terms of processing, polyubiquitinated through 'Lys-48'-polyubiquitin chains, allowing proteasomal turnover. Ubiquitination requires the kinase activity of MAP4K2/GCK. Post-translationally, autophosphorylated in response to tumor necrosis factor (TNF), endotoxins or pro-inflammatory stimuli. Autophosphorylation leads to activation. Highly expressed in germinal center but not mantle zone B-cells. Also expressed in lung, brain and placenta and at lower levels in other tissues examined.

Its subcellular location is the cytoplasm. The protein resides in the basolateral cell membrane. The protein localises to the golgi apparatus membrane. The catalysed reaction is L-seryl-[protein] + ATP = O-phospho-L-seryl-[protein] + ADP + H(+). It carries out the reaction L-threonyl-[protein] + ATP = O-phospho-L-threonyl-[protein] + ADP + H(+). The tumor necrosis factor (TNF), as well as endotoxins and pro-inflammatory stimuli such as polyinosine-polycytidine (poly(IC)), lipopolysaccharides (LPS), peptidoglycan (PGN), flagellin, or lipid A activate MAP4K2 by promoting its autophosphorylation. Functionally, serine/threonine-protein kinase which acts as an essential component of the MAP kinase signal transduction pathway. Acts as a MAPK kinase kinase kinase (MAP4K) and is an upstream activator of the stress-activated protein kinase/c-Jun N-terminal kinase (SAP/JNK) signaling pathway and to a lesser extent of the p38 MAPKs signaling pathway. Required for the efficient activation of JNKs by TRAF6-dependent stimuli, including pathogen-associated molecular patterns (PAMPs) such as polyinosine-polycytidine (poly(IC)), lipopolysaccharides (LPS), lipid A, peptidoglycan (PGN), or bacterial flagellin. To a lesser degree, IL-1 and engagement of CD40 also stimulate MAP4K2-mediated JNKs activation. The requirement for MAP4K2/GCK is most pronounced for LPS signaling, and extends to LPS stimulation of c-Jun phosphorylation and induction of IL-8. Enhances MAP3K1 oligomerization, which may relieve N-terminal mediated MAP3K1 autoinhibition and lead to activation following autophosphorylation. Also mediates the SAP/JNK signaling pathway and the p38 MAPKs signaling pathway through activation of the MAP3Ks MAP3K10/MLK2 and MAP3K11/MLK3. May play a role in the regulation of vesicle targeting or fusion. regulation of vesicle targeting or fusion. Activator of the Hippo signaling pathway which plays a pivotal role in organ size control and tumor suppression by restricting proliferation and promoting apoptosis. MAP4Ks act in parallel to and are partially redundant with STK3/MST2 and STK4/MST2 in the phosphorylation and activation of LATS1/2, and establish MAP4Ks as components of the expanded Hippo pathway. This is Mitogen-activated protein kinase kinase kinase kinase 2 from Homo sapiens (Human).